The primary structure comprises 88 residues: Apolipoprotein C-I (88 aa).

The signal sequence occupies residues 1-26; the sequence is MRLLLSLPVLLVALSVVLERPAPAQA.

Belongs to the apolipoprotein C1 family.

The protein resides in the secreted. Its function is as follows. Inhibitor of lipoprotein binding to the low density lipoprotein (LDL) receptor, LDL receptor-related protein, and very low density lipoprotein (VLDL) receptor. Associates with high density lipoproteins (HDL) and the triacylglycerol-rich lipoproteins in the plasma and makes up about 10% of the protein of the VLDL and 2% of that of HDL. Appears to interfere directly with fatty acid uptake and is also the major plasma inhibitor of cholesteryl ester transfer protein (CETP). Binds free fatty acids and reduces their intracellular esterification. Modulates the interaction of APOE with beta-migrating VLDL and inhibits binding of beta-VLDL to the LDL receptor-related protein. The protein is Apolipoprotein C-I (APOC1) of Tupaia glis (Common tree shrew).